A 186-amino-acid polypeptide reads, in one-letter code: Glutathione peroxidase 7 (186 aa).

A signal peptide spans 1–18; sequence MVAARAAAWLLLAAAACA. Cys56 is a catalytic residue.

This sequence belongs to the glutathione peroxidase family.

The protein localises to the secreted. The catalysed reaction is 2 glutathione + H2O2 = glutathione disulfide + 2 H2O. The polypeptide is Glutathione peroxidase 7 (GPX7) (Bos taurus (Bovine)).